The following is a 1010-amino-acid chain: Phosphatidylserine decarboxylase proenzyme 2 (1010 aa).

C2 domains are found at residues 1–114 (MSQA…SSWE) and 247–370 (DFES…DKPC). 3 residues coordinate Ca(2+): aspartate 342, serine 345, and aspartate 348. Residues 458–493 (LRRQLWMHLLQGNDTQMKGTLDLIELNYFVDCLGSN) form the EF-hand domain. Active-site charge relay system; for autoendoproteolytic cleavage activity residues include aspartate 734, histidine 793, and serine 880. Serine 880 functions as the Schiff-base intermediate with substrate; via pyruvic acid; for decarboxylase activity in the catalytic mechanism. Serine 880 is modified (pyruvic acid (Ser); by autocatalysis).

It belongs to the phosphatidylserine decarboxylase family. PSD-B subfamily. Eukaryotic type II sub-subfamily. As to quaternary structure, heterodimer of a large membrane-associated beta subunit and a small pyruvoyl-containing alpha subunit. Interacts with pstB2. This interaction may be a means to structurally tether the donor membrane (ER) harboring PstB2 to acceptor membranes (Golgi/endosomes) harboring PSD2 during PtdSer transport to the site of PtdEtn synthesis. The cofactor is pyruvate. Ca(2+) is required as a cofactor. In terms of processing, is synthesized initially as an inactive proenzyme. Formation of the active enzyme involves a self-maturation process in which the active site pyruvoyl group is generated from an internal serine residue via an autocatalytic post-translational modification. Two non-identical subunits are generated from the proenzyme in this reaction, and the pyruvate is formed at the N-terminus of the alpha chain, which is derived from the carboxyl end of the proenzyme. The autoendoproteolytic cleavage occurs by a canonical serine protease mechanism, in which the side chain hydroxyl group of the serine supplies its oxygen atom to form the C-terminus of the beta chain, while the remainder of the serine residue undergoes an oxidative deamination to produce ammonia and the pyruvoyl prosthetic group on the alpha chain. During this reaction, the Ser that is part of the protease active site of the proenzyme becomes the pyruvoyl prosthetic group, which constitutes an essential element of the active site of the mature decarboxylase.

Its subcellular location is the golgi apparatus membrane. The protein resides in the endosome membrane. It carries out the reaction a 1,2-diacyl-sn-glycero-3-phospho-L-serine + H(+) = a 1,2-diacyl-sn-glycero-3-phosphoethanolamine + CO2. The protein operates within phospholipid metabolism; phosphatidylethanolamine biosynthesis; phosphatidylethanolamine from CDP-diacylglycerol: step 2/2. Functionally, catalyzes the formation of phosphatidylethanolamine (PtdEtn) from phosphatidylserine (PtdSer). Plays a central role in phospholipid metabolism and in the interorganelle trafficking of phosphatidylserine. This is Phosphatidylserine decarboxylase proenzyme 2 from Komagataella phaffii (strain GS115 / ATCC 20864) (Yeast).